Consider the following 352-residue polypeptide: Molybdenum import ATP-binding protein ModC (352 aa).

The region spanning 1-229 (MLELNFSQTL…SVMNPWLPKE (229 aa)) is the ABC transporter domain. An ATP-binding site is contributed by 31–38 (GVSGAGKT). A Mop domain is found at 289 to 352 (QTSIRNVLRA…AQIKSVSITA (64 aa)).

The protein belongs to the ABC transporter superfamily. Molybdate importer (TC 3.A.1.8) family. The complex is composed of two ATP-binding proteins (ModC), two transmembrane proteins (ModB) and a solute-binding protein (ModA).

The protein resides in the cell inner membrane. The enzyme catalyses molybdate(out) + ATP + H2O = molybdate(in) + ADP + phosphate + H(+). Functionally, part of the ABC transporter complex ModABC involved in molybdenum import. Responsible for energy coupling to the transport system. The sequence is that of Molybdenum import ATP-binding protein ModC from Shigella boydii serotype 4 (strain Sb227).